Reading from the N-terminus, the 145-residue chain is NADH-quinone oxidoreductase subunit A (145 aa).

3 helical membrane-spanning segments follow: residues 14–34 (FAVF…GAWF), 66–86 (FYLV…LYAW), and 96–116 (VGFV…FYLV).

The protein belongs to the complex I subunit 3 family. NDH-1 is composed of 13 different subunits. Subunits NuoA, H, J, K, L, M, N constitute the membrane sector of the complex.

The protein resides in the cell inner membrane. The enzyme catalyses a quinone + NADH + 5 H(+)(in) = a quinol + NAD(+) + 4 H(+)(out). In terms of biological role, NDH-1 shuttles electrons from NADH, via FMN and iron-sulfur (Fe-S) centers, to quinones in the respiratory chain. The immediate electron acceptor for the enzyme in this species is believed to be ubiquinone. Couples the redox reaction to proton translocation (for every two electrons transferred, four hydrogen ions are translocated across the cytoplasmic membrane), and thus conserves the redox energy in a proton gradient. In Erwinia tasmaniensis (strain DSM 17950 / CFBP 7177 / CIP 109463 / NCPPB 4357 / Et1/99), this protein is NADH-quinone oxidoreductase subunit A.